A 335-amino-acid chain; its full sequence is MRIVINGFGRIGRLVLRQILKRNAPIEVVAINDLVSGDLLTYLFKYDSTHGSFASQATFSDGCLVVGERKIRFLAEKDVQKLPWKDLDVDVVVESTGLFVNKDDAAKHLDSGAKRVLITAPAKGDVPTFVMGVNHQKFDPANDVIISNASCTTNCLAPLAKVLLDNFGIEEGLMTTVHAATATQSVVDGPSRKDWRGGRGAFQNIIPASTGAAKAVGLCLPELKGKLTGMAFRVPVADVSVVDLTVKLSSATTYEAVCEAVKHAASTSMRNIMHYTEEAVVSSDFIGCEYSSVFDAQAGVALNDRFFKLIAWYDNEIGYATRIVDLLEYIQGNSK.

Residues 10-11 (RI), aspartate 33, lysine 77, and threonine 119 contribute to the NAD(+) site. Residues 150–152 (SCT), threonine 181, 210–211 (TG), and arginine 233 each bind D-glyceraldehyde 3-phosphate. The Nucleophile role is filled by cysteine 151. Asparagine 315 is an NAD(+) binding site.

The protein belongs to the glyceraldehyde-3-phosphate dehydrogenase family. As to quaternary structure, homotetramer.

It is found in the cytoplasm. It catalyses the reaction D-glyceraldehyde 3-phosphate + phosphate + NAD(+) = (2R)-3-phospho-glyceroyl phosphate + NADH + H(+). The protein operates within carbohydrate degradation; glycolysis; pyruvate from D-glyceraldehyde 3-phosphate: step 1/5. In terms of biological role, catalyzes the oxidative phosphorylation of glyceraldehyde 3-phosphate (G3P) to 1,3-bisphosphoglycerate (BPG) using the cofactor NAD. The first reaction step involves the formation of a hemiacetal intermediate between G3P and a cysteine residue, and this hemiacetal intermediate is then oxidized to a thioester, with concomitant reduction of NAD to NADH. The reduced NADH is then exchanged with the second NAD, and the thioester is attacked by a nucleophilic inorganic phosphate to produce BPG. This chain is Glyceraldehyde-3-phosphate dehydrogenase (gap), found in Chlamydia muridarum (strain MoPn / Nigg).